The primary structure comprises 59 residues: Large ribosomal subunit protein bL32 (59 aa).

Residues 1 to 59 (MAVQQNKKSPSKRGMHRSHDFLTTAPIAVEPTTGEVHLRHHVSPNGYYRGRKVVKTKND) form a disordered region. Over residues 49 to 59 (RGRKVVKTKND) the composition is skewed to basic residues.

Belongs to the bacterial ribosomal protein bL32 family.

The chain is Large ribosomal subunit protein bL32 from Ralstonia pickettii (strain 12J).